A 327-amino-acid chain; its full sequence is Annexin A8-like protein 1 (327 aa).

Annexin repeat units lie at residues 21–92 (FNPD…ALMY), 93–164 (PPYR…CLLQ), 177–249 (ALAL…TVVK), and 253–324 (NLHS…SLVG). The Ca(2+) site is built by Met266, Gly268, Gly270, and Asp310.

The protein belongs to the annexin family.

This is Annexin A8-like protein 1 from Homo sapiens (Human).